Consider the following 51-residue polypeptide: Ovomucoid (51 aa).

A Kazal-like domain is found at 1–49 (VDCSEYPQPACTTERRPVCGSNNKTYSNKCNFCNAVVKSNGTLTVSHFG). Cystine bridges form between Cys-3-Cys-33, Cys-11-Cys-30, and Cys-19-Cys-51. N-linked (GlcNAc...) asparagine glycosylation is present at Asn-40.

Its subcellular location is the secreted. This chain is Ovomucoid, found in Polyplectron napoleonis (Palawan peacock-pheasant).